Consider the following 345-residue polypeptide: Anthranilate phosphoribosyltransferase (345 aa).

Residues Gly79, 82–83, Thr87, 89–92, 106–114, and Ser118 each bind 5-phospho-alpha-D-ribose 1-diphosphate; these read GD, NVST, and KHGNRAVSG. Gly79 lines the anthranilate pocket. Mg(2+) is bound at residue Ser91. An anthranilate-binding site is contributed by Asn109. Arg164 serves as a coordination point for anthranilate. Asp223 and Glu224 together coordinate Mg(2+).

This sequence belongs to the anthranilate phosphoribosyltransferase family. Homodimer. Mg(2+) is required as a cofactor.

It catalyses the reaction N-(5-phospho-beta-D-ribosyl)anthranilate + diphosphate = 5-phospho-alpha-D-ribose 1-diphosphate + anthranilate. It participates in amino-acid biosynthesis; L-tryptophan biosynthesis; L-tryptophan from chorismate: step 2/5. Its function is as follows. Catalyzes the transfer of the phosphoribosyl group of 5-phosphorylribose-1-pyrophosphate (PRPP) to anthranilate to yield N-(5'-phosphoribosyl)-anthranilate (PRA). This Saccharolobus islandicus (strain M.16.27) (Sulfolobus islandicus) protein is Anthranilate phosphoribosyltransferase.